Consider the following 664-residue polypeptide: Macoilin (664 aa).

4 consecutive transmembrane segments (helical) span residues Thr-28 to Leu-48, Ala-75 to Ile-95, Val-120 to Phe-140, and Phe-154 to Val-174. Positions Tyr-252–Lys-265 are enriched in basic and acidic residues. The interval Tyr-252–Asn-274 is disordered. Position 305 is a phosphoserine (Ser-305). Residues Lys-320–Ser-348 are compositionally biased toward polar residues. The tract at residues Lys-320–Asn-375 is disordered. Residue Asn-324 is glycosylated (N-linked (GlcNAc...) asparagine). Ser-332 bears the Phosphoserine mark. N-linked (GlcNAc...) asparagine glycosylation is found at Asn-340 and Asn-452. The segment at Thr-630–Lys-664 is disordered. Residues Ser-631 and Ser-634 each carry the phosphoserine modification. Asn-655 carries N-linked (GlcNAc...) asparagine glycosylation.

It belongs to the macoilin family.

The protein localises to the rough endoplasmic reticulum membrane. Its subcellular location is the nucleus membrane. Plays a role in the regulation of neuronal activity. The sequence is that of Macoilin from Rattus norvegicus (Rat).